The following is a 230-amino-acid chain: Ureidoacrylate amidohydrolase RutB (230 aa).

The active-site Proton acceptor is the Asp24. The active site involves Lys133. Cys166 (nucleophile) is an active-site residue.

Belongs to the isochorismatase family. RutB subfamily.

The enzyme catalyses (Z)-3-ureidoacrylate + H2O + H(+) = (Z)-3-aminoacrylate + NH4(+) + CO2. It catalyses the reaction (Z)-3-ureidoacrylate + H2O = (Z)-3-aminoacrylate + carbamate + H(+). The catalysed reaction is (Z)-2-methylureidoacrylate + H2O + H(+) = (Z)-2-methylaminoacrylate + NH4(+) + CO2. In terms of biological role, hydrolyzes ureidoacrylate to form aminoacrylate and carbamate. The carbamate hydrolyzes spontaneously, thereby releasing one of the nitrogen atoms of the pyrimidine ring as ammonia and one of its carbon atoms as CO2. This is Ureidoacrylate amidohydrolase RutB from Escherichia coli O81 (strain ED1a).